We begin with the raw amino-acid sequence, 144 residues long: Ribonuclease P protein subunit RPR2 (144 aa).

The disordered stretch occupies residues 1–22 (MGKKAHGGKMKPEIDENGTLLV). Residues Cys90, Cys93, Cys115, and Cys117 each contribute to the Zn(2+) site.

This sequence belongs to the eukaryotic/archaeal RNase P protein component 4 family. In terms of assembly, component of nuclear RNase P. RNase P consists of an RNA moiety and at least 9 protein subunits including POP1, POP3, POP4, POP5, POP6, POP7, POP8, RPP1 and RPR2, many of which are shared with the RNase MPR complex. The cofactor is Zn(2+).

Its subcellular location is the nucleus. It catalyses the reaction Endonucleolytic cleavage of RNA, removing 5'-extranucleotides from tRNA precursor.. Functionally, component of ribonuclease P, a protein complex that generates mature tRNA molecules by cleaving their 5'-ends. This Saccharomyces cerevisiae (strain ATCC 204508 / S288c) (Baker's yeast) protein is Ribonuclease P protein subunit RPR2 (RPR2).